The following is a 796-amino-acid chain: Cation/H(+) antiporter 6B (796 aa).

The next 13 helical transmembrane spans lie at 54–74 (DFWE…FLLW), 93–113 (SMML…IPCL), 131–151 (IGAF…DVGI), 159–179 (SVVI…LLYS), 194–213 (YTVM…NMLL), 223–243 (FGQI…FLTV), 259–279 (LAFM…LWVI), 285–305 (GAPV…LSYL), 310–330 (FLFF…NGPP), 344–364 (EGIF…WSFL), 382–402 (FSFL…AALA), 411–431 (IILG…VLTA), and 444–464 (LLGV…HFLY).

Belongs to the monovalent cation:proton antiporter 2 (CPA2) transporter (TC 2.A.37) family. CHX (TC 2.A.37.4) subfamily. As to expression, preferentially expressed in pollen.

The protein localises to the membrane. Functionally, may operate as a cation/H(+) antiporter. The sequence is that of Cation/H(+) antiporter 6B (CHX6b) from Arabidopsis thaliana (Mouse-ear cress).